Consider the following 663-residue polypeptide: DNA ligase (663 aa).

NAD(+) contacts are provided by residues D31–D35, S80–L81, and E110. K112 acts as the N6-AMP-lysine intermediate in catalysis. 4 residues coordinate NAD(+): R133, E168, K284, and K308. 4 residues coordinate Zn(2+): C402, C405, C420, and C425. The region spanning I586–E663 is the BRCT domain.

This sequence belongs to the NAD-dependent DNA ligase family. LigA subfamily. It depends on Mg(2+) as a cofactor. Requires Mn(2+) as cofactor.

The catalysed reaction is NAD(+) + (deoxyribonucleotide)n-3'-hydroxyl + 5'-phospho-(deoxyribonucleotide)m = (deoxyribonucleotide)n+m + AMP + beta-nicotinamide D-nucleotide.. In terms of biological role, DNA ligase that catalyzes the formation of phosphodiester linkages between 5'-phosphoryl and 3'-hydroxyl groups in double-stranded DNA using NAD as a coenzyme and as the energy source for the reaction. It is essential for DNA replication and repair of damaged DNA. In Acetivibrio thermocellus (strain ATCC 27405 / DSM 1237 / JCM 9322 / NBRC 103400 / NCIMB 10682 / NRRL B-4536 / VPI 7372) (Clostridium thermocellum), this protein is DNA ligase.